Consider the following 154-residue polypeptide: Protein X (154 aa).

A mitochondrial targeting sequence region spans residues 68 to 117 (PCALRFTSARRMETTVNAHQILPKVLHKRTLGLSAMSTTDLEAYFKDCLF).

It belongs to the orthohepadnavirus protein X family. May form homodimer. May interact with host CEBPA, CFLAR, CREB1, DDB1, E4F1, HBXIP, HSPD1/HSP60, NFKBIA, POLR2E and SMAD4. Interacts with host SMC5-SMC6 complex and induces its degradation. Interacts with host TRPC4AP; leading to prevent ubiquitination of TRPC4AP. Interacts with host PLSCR1; this interaction promotes ubiquitination and degradation of HBx and impairs HBx-mediated cell proliferation. In terms of processing, a fraction may be phosphorylated in insect cells and HepG2 cells, a human hepatoblastoma cell line. Phosphorylated in vitro by host protein kinase C or mitogen-activated protein kinase. N-acetylated in insect cells.

The protein localises to the host cytoplasm. The protein resides in the host nucleus. It is found in the host mitochondrion. Functionally, multifunctional protein that plays a role in silencing host antiviral defenses and promoting viral transcription. Does not seem to be essential for HBV infection. May be directly involved in development of cirrhosis and liver cancer (hepatocellular carcinoma). Most of cytosolic activities involve modulation of cytosolic calcium. The effect on apoptosis is controversial depending on the cell types in which the studies have been conducted. May induce apoptosis by localizing in mitochondria and causing loss of mitochondrial membrane potential. May also modulate apoptosis by binding host CFLAR, a key regulator of the death-inducing signaling complex (DISC). Promotes viral transcription by using the host E3 ubiquitin ligase DDB1 to target the SMC5-SMC6 complex to proteasomal degradation. This host complex would otherwise bind to viral episomal DNA, and prevents its transcription. Moderately stimulates transcription of many different viral and cellular transcription elements. Promoters and enhancers stimulated by HBx contain DNA binding sites for NF-kappa-B, AP-1, AP-2, c-EBP, ATF/CREB, or the calcium-activated factor NF-AT. This is Protein X from Hepatitis B virus genotype E subtype ayw4 (isolate Kou) (HBV-E).